We begin with the raw amino-acid sequence, 380 residues long: Cytochrome b (380 aa).

Transmembrane regions (helical) follow at residues 34-54 (FGSL…LLAA), 78-99 (WLIR…YLHI), 114-134 (WNTG…GYVL), and 179-199 (FFTL…IHLT). 2 residues coordinate heme b: histidine 84 and histidine 98. Residues histidine 183 and histidine 197 each contribute to the heme b site. Histidine 202 is a binding site for a ubiquinone. Transmembrane regions (helical) follow at residues 227-247 (LKDI…ALFS), 289-309 (LGGV…PLLH), 321-341 (FSQL…WVGS), and 348-368 (FIII…ILFP).

Belongs to the cytochrome b family. As to quaternary structure, the cytochrome bc1 complex contains 11 subunits: 3 respiratory subunits (MT-CYB, CYC1 and UQCRFS1), 2 core proteins (UQCRC1 and UQCRC2) and 6 low-molecular weight proteins (UQCRH/QCR6, UQCRB/QCR7, UQCRQ/QCR8, UQCR10/QCR9, UQCR11/QCR10 and a cleavage product of UQCRFS1). This cytochrome bc1 complex then forms a dimer. Requires heme b as cofactor.

The protein localises to the mitochondrion inner membrane. Its function is as follows. Component of the ubiquinol-cytochrome c reductase complex (complex III or cytochrome b-c1 complex) that is part of the mitochondrial respiratory chain. The b-c1 complex mediates electron transfer from ubiquinol to cytochrome c. Contributes to the generation of a proton gradient across the mitochondrial membrane that is then used for ATP synthesis. In Antigone rubicunda (Brolga crane), this protein is Cytochrome b (MT-CYB).